A 243-amino-acid chain; its full sequence is Adenosine 5'-phosphosulfate reductase (243 aa).

Cys126, Cys127, Cys209, and Cys212 together coordinate [4Fe-4S] cluster. The active-site Nucleophile; cysteine thiosulfonate intermediate is the Cys235.

This sequence belongs to the PAPS reductase family. CysH subfamily. [4Fe-4S] cluster is required as a cofactor.

The protein resides in the cytoplasm. The catalysed reaction is [thioredoxin]-disulfide + sulfite + AMP + 2 H(+) = adenosine 5'-phosphosulfate + [thioredoxin]-dithiol. Its pathway is sulfur metabolism; hydrogen sulfide biosynthesis; sulfite from sulfate. In terms of biological role, catalyzes the formation of sulfite from adenosine 5'-phosphosulfate (APS) using thioredoxin as an electron donor. The sequence is that of Adenosine 5'-phosphosulfate reductase from Staphylococcus epidermidis (strain ATCC 12228 / FDA PCI 1200).